A 601-amino-acid polypeptide reads, in one-letter code: MEGSDFLLAGVLFLFAAVAAVPLASRLGIGAVLGYLLAGIAIGPWGLGFISDVDEILHFSELGVVFLMFIIGLELNPSKLWQLRRSIFGVGAAQVLLSAALLAGLLMLTDFAWQAAVVGGIGLAMSSTAMALQLMREKGMNRSESGQLGFSVLLFQDLAVIPALALVPLLAGSADEHFDWMKIGMKVLAFVGMLIGGRYLLRPVFRFIAASGVREVFTAATLLLVLGSALFMDALGLSMALGTFIAGVLLAESEYRHELETAIDPFKGLLLGLFFISVGMSLNLGVLYTHLLWVVISVVVLVAVKILVLYLLARLYGVRSSERMQFAGVLSQGGEFAFVLFSTASSQRLFQGDQMALLLVTVTLSMMTTPLLMKLVDKWLSRQFNGPEEEDEKPWVNDDKPQVIVVGFGRFGQVIGRLLMANKMRITVLERDISAVNLMRKYGYKVYYGDATQVDLLRSAGAEAAESIVITCNEPEDTMKLVEICQQHFPHLHILARARGRVEAHELLQAGVTQFSRETFSSALELGRKTLVTLGMHPHQAQRAQLHFRRLDMRMLRELIPMHADTVQISRAREARRELEEIFQREMQQERRQLDGWDEFE.

Helical transmembrane passes span 4 to 24, 29 to 49, 55 to 75, 87 to 107, 115 to 135, 152 to 172, 177 to 197, 207 to 227, 230 to 250, 268 to 288, 291 to 311, 324 to 344, and 356 to 376; these read SDFL…VPLA, IGAV…GLGF, EILH…GLEL, IFGV…GLLM, AAVV…LQLM, VLLF…LLAG, HFDW…LIGG, FIAA…LVLG, LFMD…GVLL, GLLL…GVLY, LLWV…VLYL, MQFA…FSTA, and ALLL…MKLV. Residues 400 to 519 form the RCK N-terminal domain; that stretch reads KPQVIVVGFG…AGVTQFSRET (120 aa).

The protein belongs to the monovalent cation:proton antiporter 2 (CPA2) transporter (TC 2.A.37) family. KefB subfamily. As to quaternary structure, interacts with the regulatory subunit KefG.

It localises to the cell inner membrane. Its function is as follows. Pore-forming subunit of a potassium efflux system that confers protection against electrophiles. Catalyzes K(+)/H(+) antiport. This chain is Glutathione-regulated potassium-efflux system protein KefB, found in Shigella sonnei (strain Ss046).